The chain runs to 1114 residues: Kinesin-like protein KIN-12F (1114 aa).

A disordered region spans residues 1 to 84 (MADNRIAGSL…RSQVSASRPR (84 aa)). Polar residues-rich tracts occupy residues 10–39 (LPTS…SNPD) and 48–80 (PNIH…QVSA). One can recognise a Kinesin motor domain in the interval 104-436 (HVKVVVRIKP…LRFGERAKAM (333 aa)). 175-182 (GQNGSGKT) serves as a coordination point for ATP. 3 coiled-coil regions span residues 761-791 (QQEL…QTED), 872-942 (ARSF…LRRA), and 1038-1081 (EVLV…HKLE). The disordered stretch occupies residues 1092–1114 (NTLPESALQPLHQRNSAIEEEGM).

This sequence belongs to the TRAFAC class myosin-kinesin ATPase superfamily. Kinesin family. KIN-12 subfamily.

The protein is Kinesin-like protein KIN-12F of Arabidopsis thaliana (Mouse-ear cress).